The following is a 525-amino-acid chain: Chromosomal replication initiator protein DnaA (525 aa).

A domain I, interacts with DnaA modulators region spans residues 1-71 (MNDFWQHCSA…ADLAREFWNT (71 aa)). Residues 71–188 (TPIEVQFVLD…GEADSMYERS (118 aa)) form a domain II region. Residues 160–182 (AAAGRRTWRPGPGAAPANGGEAD) form a disordered region. Positions 169 to 181 (PGPGAAPANGGEA) are enriched in low complexity. A domain III, AAA+ region region spans residues 189–405 (KLNPVLTFDN…GALRKILAYS (217 aa)). ATP contacts are provided by G233, G235, K236, and T237. The tract at residues 406–525 (KFHGREISIE…LHVLEQTLKG (120 aa)) is domain IV, binds dsDNA.

It belongs to the DnaA family. As to quaternary structure, oligomerizes as a right-handed, spiral filament on DNA at oriC.

The protein localises to the cytoplasm. Plays an essential role in the initiation and regulation of chromosomal replication. ATP-DnaA binds to the origin of replication (oriC) to initiate formation of the DNA replication initiation complex once per cell cycle. Binds the DnaA box (a 9 base pair repeat at the origin) and separates the double-stranded (ds)DNA. Forms a right-handed helical filament on oriC DNA; dsDNA binds to the exterior of the filament while single-stranded (ss)DNA is stabiized in the filament's interior. The ATP-DnaA-oriC complex binds and stabilizes one strand of the AT-rich DNA unwinding element (DUE), permitting loading of DNA polymerase. After initiation quickly degrades to an ADP-DnaA complex that is not apt for DNA replication. Binds acidic phospholipids. The sequence is that of Chromosomal replication initiator protein DnaA from Burkholderia cenocepacia (strain ATCC BAA-245 / DSM 16553 / LMG 16656 / NCTC 13227 / J2315 / CF5610) (Burkholderia cepacia (strain J2315)).